Reading from the N-terminus, the 156-residue chain is Small ribosomal subunit protein uS7 (156 aa).

This sequence belongs to the universal ribosomal protein uS7 family. In terms of assembly, part of the 30S ribosomal subunit. Contacts proteins S9 and S11.

One of the primary rRNA binding proteins, it binds directly to 16S rRNA where it nucleates assembly of the head domain of the 30S subunit. Is located at the subunit interface close to the decoding center, probably blocks exit of the E-site tRNA. The polypeptide is Small ribosomal subunit protein uS7 (Bacillus cereus (strain ZK / E33L)).